Reading from the N-terminus, the 326-residue chain is Peroxidase 1 (326 aa).

The signal sequence occupies residues 1-22 (MASSRVILALLLAAAAVMASSA). Gln-23 is modified (pyrrolidone carboxylic acid). 4 cysteine pairs are disulfide-bonded: Cys-33–Cys-112, Cys-66–Cys-71, Cys-118–Cys-322, and Cys-196–Cys-231. His-64 functions as the Proton acceptor in the catalytic mechanism. Residues Asp-65, Val-68, Gly-70, Asp-72, and Ser-74 each coordinate Ca(2+). N-linked (GlcNAc...) asparagine glycans are attached at residues Asn-82 and Asn-153. Pro-159 contacts substrate. An N-linked (GlcNAc...) asparagine glycan is attached at Asn-164. Position 189 (His-189) interacts with heme b. Thr-190 is a binding site for Ca(2+). Asn-205 and Asn-237 each carry an N-linked (GlcNAc...) asparagine glycan. Ca(2+) contacts are provided by Asp-244, Ser-247, and Asp-252.

Belongs to the peroxidase family. Classical plant (class III) peroxidase subfamily. Ca(2+) serves as cofactor. The cofactor is heme b.

It localises to the secreted. It carries out the reaction 2 a phenolic donor + H2O2 = 2 a phenolic radical donor + 2 H2O. Removal of H(2)O(2), oxidation of toxic reductants, biosynthesis and degradation of lignin, suberization, auxin catabolism, response to environmental stresses such as wounding, pathogen attack and oxidative stress. These functions might be dependent on each isozyme/isoform in each plant tissue. The chain is Peroxidase 1 (PRX74) from Oryza sativa subsp. japonica (Rice).